The following is a 212-amino-acid chain: Hevein-like preproprotein (212 aa).

A signal peptide spans 1–21 (MKIRLSITIILLSYTVATVAG). Residues 22-64 (QQCGRQGGGRTCPGNICCSQYGYCGTTADYCSPTNNCQSNCWG) form the Chitin-binding type-1 domain. 7 disulfide bridges follow: Cys-24-Cys-39, Cys-33-Cys-45, Cys-38-Cys-52, Cys-58-Cys-62, Cys-100-Cys-132, Cys-121-Cys-155, and Cys-135-Cys-191. In terms of domain architecture, Barwin spans 72–193 (ESASNVRATY…VDYQFVDCGN (122 aa)).

In terms of assembly, CB-HEL interacts strongly with a fungal fruiting body lectin.

It localises to the vacuole. Its function is as follows. Fungal growth inhibitors. Neither CB-HEL nor CD-HEL have chitinase activity, but both have antimicrobial activities. CD-HEL has RNase, but no DNase activity. The polypeptide is Hevein-like preproprotein (HEL) (Arabidopsis thaliana (Mouse-ear cress)).